Consider the following 367-residue polypeptide: Apolipoprotein A-V (367 aa).

The first 20 residues, 1 to 20 (MVAVLTWALALLSAFATVQT), serve as a signal peptide directing secretion. Serine 56 is modified (phosphoserine). The tract at residues 71–90 (LGPLSGQGREPPGLPHDPEG) is disordered.

This sequence belongs to the apolipoprotein A1/A4/E family. As to quaternary structure, interacts with GPIHBP1. Interacts with SORL1; this interaction leads to APOA5 internalization and sorting either to lysosomes and degradation, or to the trans-Golgi network. Phosphorylated by FAM20C in the extracellular medium.

The protein resides in the secreted. It localises to the early endosome. It is found in the late endosome. The protein localises to the golgi apparatus. Its subcellular location is the trans-Golgi network. Minor apolipoprotein mainly associated with HDL and to a lesser extent with VLDL. May also be associated with chylomicrons. Important determinant of plasma triglyceride (TG) levels by both being a potent stimulator of apo-CII lipoprotein lipase (LPL) TG hydrolysis and an inhibitor of the hepatic VLDL-TG production rate (without affecting the VLDL-apoB production rate). Activates poorly lecithin:cholesterol acyltransferase (LCAT) and does not enhance efflux of cholesterol from macrophages. Binds heparin. This chain is Apolipoprotein A-V (APOA5), found in Neomonachus schauinslandi (Hawaiian monk seal).